Here is a 372-residue protein sequence, read N- to C-terminus: F-box/kelch-repeat protein At5g48990 (372 aa).

An F-box domain is found at Ser14–Arg60. A Kelch repeat occupies Arg176–Tyr222.

This chain is F-box/kelch-repeat protein At5g48990, found in Arabidopsis thaliana (Mouse-ear cress).